The primary structure comprises 418 residues: Glutamyl-tRNA(Gln) amidotransferase subunit D (418 aa).

An Asparaginase/glutaminase domain is found at 74-405; the sequence is KNISILSTGG…KEAKELMSKN (332 aa). Residues Thr84, Thr160, Asp161, and Lys237 contribute to the active site.

This sequence belongs to the asparaginase 1 family. GatD subfamily. In terms of assembly, heterodimer of GatD and GatE.

It carries out the reaction L-glutamyl-tRNA(Gln) + L-glutamine + ATP + H2O = L-glutaminyl-tRNA(Gln) + L-glutamate + ADP + phosphate + H(+). Functionally, allows the formation of correctly charged Gln-tRNA(Gln) through the transamidation of misacylated Glu-tRNA(Gln) in organisms which lack glutaminyl-tRNA synthetase. The reaction takes place in the presence of glutamine and ATP through an activated gamma-phospho-Glu-tRNA(Gln). The GatDE system is specific for glutamate and does not act on aspartate. In Methanococcus maripaludis (strain DSM 14266 / JCM 13030 / NBRC 101832 / S2 / LL), this protein is Glutamyl-tRNA(Gln) amidotransferase subunit D.